The primary structure comprises 521 residues: Nitric oxide reductase transcription regulator NorR2 (521 aa).

4-aspartylphosphate is present on Asp56. One can recognise a Sigma-54 factor interaction domain in the interval Ile193–Leu422. Residues Gly221 to Glu228 and Glu293 to Gln302 contribute to the ATP site. A DNA-binding region (H-T-H motif) is located at residues Trp497–Arg516.

It functions in the pathway nitrogen metabolism; nitrate reduction (denitrification) [regulation]. In terms of biological role, required for the nitric oxide (NO) induced expression of NO reductase. Not required for expression of 2 other pathway members, nitrate reductase (nirS) and nitrous oxide reductase (nosZ). In Cupriavidus necator (strain ATCC 17699 / DSM 428 / KCTC 22496 / NCIMB 10442 / H16 / Stanier 337) (Ralstonia eutropha), this protein is Nitric oxide reductase transcription regulator NorR2 (norR2).